A 340-amino-acid polypeptide reads, in one-letter code: Undecaprenyl-phosphate 4-deoxy-4-formamido-L-arabinose transferase (340 aa).

The next 2 helical transmembrane spans lie at L235 to F255 and L269 to L289.

The protein belongs to the glycosyltransferase 2 family.

Its subcellular location is the cell inner membrane. It catalyses the reaction UDP-4-deoxy-4-formamido-beta-L-arabinose + di-trans,octa-cis-undecaprenyl phosphate = 4-deoxy-4-formamido-alpha-L-arabinopyranosyl di-trans,octa-cis-undecaprenyl phosphate + UDP. It participates in glycolipid biosynthesis; 4-amino-4-deoxy-alpha-L-arabinose undecaprenyl phosphate biosynthesis; 4-amino-4-deoxy-alpha-L-arabinose undecaprenyl phosphate from UDP-4-deoxy-4-formamido-beta-L-arabinose and undecaprenyl phosphate: step 1/2. The protein operates within bacterial outer membrane biogenesis; lipopolysaccharide biosynthesis. In terms of biological role, catalyzes the transfer of 4-deoxy-4-formamido-L-arabinose from UDP to undecaprenyl phosphate. The modified arabinose is attached to lipid A and is required for resistance to polymyxin and cationic antimicrobial peptides. This chain is Undecaprenyl-phosphate 4-deoxy-4-formamido-L-arabinose transferase, found in Pseudomonas fluorescens (strain Pf0-1).